Reading from the N-terminus, the 352-residue chain is tRNA-specific 2-thiouridylase MnmA (352 aa).

ATP-binding positions include 6-13 and leucine 32; that span reads AMSGGVDS. Cysteine 101 functions as the Nucleophile in the catalytic mechanism. Cysteine 101 and cysteine 194 are oxidised to a cystine. Position 125 (glycine 125) interacts with ATP. The tract at residues 144-146 is interaction with tRNA; it reads KDQ. The active-site Cysteine persulfide intermediate is the cysteine 194.

The protein belongs to the MnmA/TRMU family.

The protein localises to the cytoplasm. It catalyses the reaction S-sulfanyl-L-cysteinyl-[protein] + uridine(34) in tRNA + AH2 + ATP = 2-thiouridine(34) in tRNA + L-cysteinyl-[protein] + A + AMP + diphosphate + H(+). Catalyzes the 2-thiolation of uridine at the wobble position (U34) of tRNA, leading to the formation of s(2)U34. The protein is tRNA-specific 2-thiouridylase MnmA of Frankia alni (strain DSM 45986 / CECT 9034 / ACN14a).